Reading from the N-terminus, the 171-residue chain is MRLSYRLVSGLLVLASIVGMSFALYLEHVKGLEPCPLCIFQRVGLMAMGFVALIAFLHNPVSNAIKRFYAFLAGVAILWSVGVAGRHVWLQHLPPDQVPSCGPGLNYLIDALPMKTVLQEVLSGSGECAAIDWTFLGQSLPVWSLAYFLLLLLVCLWQLFRFYPVFKTAKK.

Residues 1–8 are Cytoplasmic-facing; the sequence is MRLSYRLV. The chain crosses the membrane as a helical span at residues 9-25; that stretch reads SGLLVLASIVGMSFALY. The Periplasmic portion of the chain corresponds to 26–43; sequence LEHVKGLEPCPLCIFQRV. A disulfide bridge connects residues cysteine 35 and cysteine 38. The helical transmembrane segment at 44–60 threads the bilayer; the sequence is GLMAMGFVALIAFLHNP. Topologically, residues 61–67 are cytoplasmic; sequence VSNAIKR. A helical membrane pass occupies residues 68-85; the sequence is FYAFLAGVAILWSVGVAG. Over 86 to 142 the chain is Periplasmic; it reads RHVWLQHLPPDQVPSCGPGLNYLIDALPMKTVLQEVLSGSGECAAIDWTFLGQSLPV. Cysteines 101 and 128 form a disulfide. The helical transmembrane segment at 143-161 threads the bilayer; it reads WSLAYFLLLLLVCLWQLFR. Over 162 to 171 the chain is Cytoplasmic; the sequence is FYPVFKTAKK.

The protein belongs to the DsbB family.

Its subcellular location is the cell inner membrane. In terms of biological role, required for disulfide bond formation in some periplasmic proteins. Acts by oxidizing the DsbA protein. In Acinetobacter baumannii (strain ATCC 17978 / DSM 105126 / CIP 53.77 / LMG 1025 / NCDC KC755 / 5377), this protein is Disulfide bond formation protein B.